A 322-amino-acid polypeptide reads, in one-letter code: Quinolinate synthase (322 aa).

2 residues coordinate iminosuccinate: H36 and S53. Residue C98 participates in [4Fe-4S] cluster binding. Iminosuccinate-binding positions include 124 to 126 (YIN) and S141. [4Fe-4S] cluster is bound at residue C184. Residues 210 to 212 (HPE) and T227 contribute to the iminosuccinate site. Residue C278 participates in [4Fe-4S] cluster binding.

The protein belongs to the quinolinate synthase family. Type 2 subfamily. The cofactor is [4Fe-4S] cluster.

It is found in the cytoplasm. The enzyme catalyses iminosuccinate + dihydroxyacetone phosphate = quinolinate + phosphate + 2 H2O + H(+). The protein operates within cofactor biosynthesis; NAD(+) biosynthesis; quinolinate from iminoaspartate: step 1/1. Catalyzes the condensation of iminoaspartate with dihydroxyacetone phosphate to form quinolinate. The polypeptide is Quinolinate synthase (Chloroherpeton thalassium (strain ATCC 35110 / GB-78)).